The sequence spans 968 residues: RNA polymerase-associated protein RapA (968 aa).

The Helicase ATP-binding domain maps to Asp-164 to Asn-334. Asp-177–Thr-184 contributes to the ATP binding site. The short motif at Asp-280 to His-283 is the DEAH box element. The 173-residue stretch at Arg-490–Gly-662 folds into the Helicase C-terminal domain.

Belongs to the SNF2/RAD54 helicase family. RapA subfamily. In terms of assembly, interacts with the RNAP. Has a higher affinity for the core RNAP than for the holoenzyme. Its ATPase activity is stimulated by binding to RNAP.

Its function is as follows. Transcription regulator that activates transcription by stimulating RNA polymerase (RNAP) recycling in case of stress conditions such as supercoiled DNA or high salt concentrations. Probably acts by releasing the RNAP, when it is trapped or immobilized on tightly supercoiled DNA. Does not activate transcription on linear DNA. Probably not involved in DNA repair. This Shigella flexneri serotype 5b (strain 8401) protein is RNA polymerase-associated protein RapA.